The primary structure comprises 446 residues: Tubulin beta-2 chain (446 aa).

Residues Gln11, Glu69, Ser138, Gly142, Thr143, Gly144, Asn204, and Asn226 each contribute to the GTP site. Residue Glu69 coordinates Mg(2+). Residues 424 to 446 (QYQEATADEEGEFDEDEEGGGDE) are disordered. Over residues 429 to 446 (TADEEGEFDEDEEGGGDE) the composition is skewed to acidic residues.

This sequence belongs to the tubulin family. Dimer of alpha and beta chains. A typical microtubule is a hollow water-filled tube with an outer diameter of 25 nm and an inner diameter of 15 nM. Alpha-beta heterodimers associate head-to-tail to form protofilaments running lengthwise along the microtubule wall with the beta-tubulin subunit facing the microtubule plus end conferring a structural polarity. Microtubules usually have 13 protofilaments but different protofilament numbers can be found in some organisms and specialized cells. It depends on Mg(2+) as a cofactor. Testis specific.

Its subcellular location is the cytoplasm. The protein resides in the cytoskeleton. Tubulin is the major constituent of microtubules, a cylinder consisting of laterally associated linear protofilaments composed of alpha- and beta-tubulin heterodimers. Microtubules grow by the addition of GTP-tubulin dimers to the microtubule end, where a stabilizing cap forms. Below the cap, tubulin dimers are in GDP-bound state, owing to GTPase activity of alpha-tubulin. The polypeptide is Tubulin beta-2 chain (betaTub85D) (Drosophila melanogaster (Fruit fly)).